The sequence spans 238 residues: Polynucleotide 3'-phosphatase (238 aa).

The protein belongs to the DNA 3' phosphatase family.

Its subcellular location is the nucleus. It carries out the reaction a 3'end (2'-deoxyribonucleotide 3'-phosphate)-DNA + H2O = a 3'-end 2'-deoxyribonucleotide-DNA + phosphate. Functionally, dephosphorylate DNA's 3'-phosphate termini. Has a role in the repair of breaks in single-stranded DNA. In Saccharomyces cerevisiae (strain ATCC 204508 / S288c) (Baker's yeast), this protein is Polynucleotide 3'-phosphatase (TPP1).